A 209-amino-acid polypeptide reads, in one-letter code: MGQKVHPRGFRLGITTDWQAKWFNEKNYKEYLLEDEEIRKVIKSKYAQAGISEIVIERPDSERVVAIVKTARPGIIIGKKGAEITALRKDLEEKFNRRFIVNVEEIKTPEVDAQLIAENVANRIEKRASYKVVMKRAIFNAMKKGAKGIKIMVSGRLAGAEIARTEWYLKGRLPLQTIRSIIDYGTARAETKYGTIGIKVWVYKGDADI.

Residues 38–107 enclose the KH type-2 domain; the sequence is IRKVIKSKYA…RFIVNVEEIK (70 aa).

It belongs to the universal ribosomal protein uS3 family. In terms of assembly, part of the 30S ribosomal subunit. Forms a tight complex with proteins S10 and S14.

Functionally, binds the lower part of the 30S subunit head. Binds mRNA in the 70S ribosome, positioning it for translation. The polypeptide is Small ribosomal subunit protein uS3 (Thermosipho melanesiensis (strain DSM 12029 / CIP 104789 / BI429)).